We begin with the raw amino-acid sequence, 194 residues long: 7-methyl-GTP pyrophosphatase (194 aa).

Aspartate 69 serves as the catalytic Proton acceptor.

It belongs to the Maf family. YceF subfamily. A divalent metal cation serves as cofactor.

It is found in the cytoplasm. It catalyses the reaction N(7)-methyl-GTP + H2O = N(7)-methyl-GMP + diphosphate + H(+). Nucleoside triphosphate pyrophosphatase that hydrolyzes 7-methyl-GTP (m(7)GTP). May have a dual role in cell division arrest and in preventing the incorporation of modified nucleotides into cellular nucleic acids. The protein is 7-methyl-GTP pyrophosphatase (yceF1) of Shigella boydii serotype 4 (strain Sb227).